Here is a 778-residue protein sequence, read N- to C-terminus: Probable potassium transporter 13 (778 aa).

Topologically, residues 1 to 28 (MDVEGGGGGGGGAPPRGRNSWGWQKGTL) are cytoplasmic. Residues 29–49 (LLAYQSFGVVYGDLCISPVYV) form a helical membrane-spanning segment. The Extracellular segment spans residues 50–72 (YKNTFSGKLRLHEEDEEILGVLS). A helical transmembrane segment spans residues 73 to 93 (LVFWSLTLIPLLKYIILVLGA). The Cytoplasmic portion of the chain corresponds to 94 to 156 (DDNGEGGTFA…AFFEKHYSLR (63 aa)). Residues 157–177 (VVLLLFVLMGTSMVIGDGVLT) form a helical membrane-spanning segment. Residues 178 to 199 (PTMSVLAAVSGLRIKFPELHEN) lie on the Extracellular side of the membrane. A glycan (N-linked (GlcNAc...) asparagine) is linked at Asn199. Residues 200-220 (YTVLLACVILIGLFALQHYGT) traverse the membrane as a helical segment. Topologically, residues 221–222 (RR) are cytoplasmic. A helical transmembrane segment spans residues 223–243 (VGFLFAPILISWLTCIGGIGI). The Extracellular portion of the chain corresponds to 244 to 276 (YNIIKWNPSVIRALSPYYIYNFFRKAGKDGWSS). A helical membrane pass occupies residues 277-297 (LGGIVLCLTGAEAMFADLGHF). Topologically, residues 298 to 303 (SKLSLR) are cytoplasmic. Residues 304 to 324 (LGFTIVVYPCLVLAYMGEAAY) form a helical membrane-spanning segment. The Extracellular segment spans residues 325 to 343 (LSKHREDLQSSFYKALPDR). The chain crosses the membrane as a helical span at residues 344-364 (VFWPVLFIATLATAVGSQAII). Over 365 to 395 (SATFSIISQCRALGCFPRIKVVHTSSHVHGQ) the chain is Cytoplasmic. The chain crosses the membrane as a helical span at residues 396-416 (IYIPEVNWVLMSLCLAVTIGF). At 417-424 (RDTEMIGN) the chain is on the extracellular side. Residues 425-445 (AYGLAVILVMCATTCLMFLVI) form a helical membrane-spanning segment. The Cytoplasmic segment spans residues 446–451 (TTVWNR). A helical transmembrane segment spans residues 452–472 (WVVWAAAFTVVFGSVELLYLS). At 473–477 (ACLAK) the chain is on the extracellular side. Residues 478 to 498 (VPHGGWLPLLLSLTTLLVMST) form a helical membrane-spanning segment. Residues 499 to 778 (WHYGTAMKQQ…LIEVGMAYRV (280 aa)) lie on the Cytoplasmic side of the membrane. A compositionally biased stretch (polar residues) spans 655-677 (PATSSSGGSNQHAFDAGTTTSSC). The segment at 655–704 (PATSSSGGSNQHAFDAGTTTSSCEIDATAGGGGRRKVRFDNDGGGGGEEE) is disordered.

Belongs to the HAK/KUP transporter (TC 2.A.72.3) family.

It is found in the membrane. In terms of biological role, high-affinity potassium transporter. The sequence is that of Probable potassium transporter 13 (HAK13) from Oryza sativa subsp. japonica (Rice).